We begin with the raw amino-acid sequence, 339 residues long: Dihydroorotate dehydrogenase (quinone) (339 aa).

FMN-binding positions include 64 to 68 and Thr88; that span reads AGADK. A substrate-binding site is contributed by Lys68. 113-117 serves as a coordination point for substrate; it reads NRNGF. FMN contacts are provided by Asn141 and Asn174. Asn174 contacts substrate. The active-site Nucleophile is the Ser177. Residue Asn179 participates in substrate binding. The FMN site is built by Lys219 and Thr247. A substrate-binding site is contributed by 248–249; that stretch reads NT. Residues Gly270, Gly299, and 320–321 contribute to the FMN site; that span reads YS.

This sequence belongs to the dihydroorotate dehydrogenase family. Type 2 subfamily. As to quaternary structure, monomer. FMN serves as cofactor.

Its subcellular location is the cell membrane. The enzyme catalyses (S)-dihydroorotate + a quinone = orotate + a quinol. It functions in the pathway pyrimidine metabolism; UMP biosynthesis via de novo pathway; orotate from (S)-dihydroorotate (quinone route): step 1/1. Functionally, catalyzes the conversion of dihydroorotate to orotate with quinone as electron acceptor. The polypeptide is Dihydroorotate dehydrogenase (quinone) (Haemophilus influenzae (strain PittGG)).